Consider the following 416-residue polypeptide: Probable pectate lyase 8 (416 aa).

Positions 1-24 are cleaved as a signal peptide; that stretch reads MAVTKLILFASALLLTALFIGVNA. Residues Asn-23, Asn-28, and Asn-52 are each glycosylated (N-linked (GlcNAc...) asparagine). 3 residues coordinate Ca(2+): Asp-214, Asp-238, and Asp-242. Residue Arg-294 is part of the active site.

This sequence belongs to the polysaccharide lyase 1 family. Requires Ca(2+) as cofactor.

The enzyme catalyses Eliminative cleavage of (1-&gt;4)-alpha-D-galacturonan to give oligosaccharides with 4-deoxy-alpha-D-galact-4-enuronosyl groups at their non-reducing ends.. The protein operates within glycan metabolism; pectin degradation; 2-dehydro-3-deoxy-D-gluconate from pectin: step 2/5. The protein is Probable pectate lyase 8 of Arabidopsis thaliana (Mouse-ear cress).